Consider the following 182-residue polypeptide: MELAEIEELMNKAVQATQRSFNTVRTGRANSSLLDRIQVEYYGVPTPLKALASLTTPDSSTLLIQPFDPSTLAAIERAIVASDLGLTPSNDGKVVRLTIPPLTEERRKELSKQVAKLAEEGRVSIRNIRRDGIDSVRKREKNGELSEDESKSLQDDIQKLTDRYIKKIDELLAEKEKELTTL.

The protein belongs to the RRF family.

It localises to the cytoplasm. Its function is as follows. Responsible for the release of ribosomes from messenger RNA at the termination of protein biosynthesis. May increase the efficiency of translation by recycling ribosomes from one round of translation to another. This Synechococcus sp. (strain JA-2-3B'a(2-13)) (Cyanobacteria bacterium Yellowstone B-Prime) protein is Ribosome-recycling factor.